The chain runs to 258 residues: Hydroxyacylglutathione hydrolase (258 aa).

Histidine 55, histidine 57, aspartate 59, histidine 60, histidine 115, aspartate 132, and histidine 170 together coordinate Zn(2+).

Belongs to the metallo-beta-lactamase superfamily. Glyoxalase II family. In terms of assembly, monomer. Zn(2+) serves as cofactor.

The enzyme catalyses an S-(2-hydroxyacyl)glutathione + H2O = a 2-hydroxy carboxylate + glutathione + H(+). The protein operates within secondary metabolite metabolism; methylglyoxal degradation; (R)-lactate from methylglyoxal: step 2/2. Its function is as follows. Thiolesterase that catalyzes the hydrolysis of S-D-lactoyl-glutathione to form glutathione and D-lactic acid. In Shewanella halifaxensis (strain HAW-EB4), this protein is Hydroxyacylglutathione hydrolase.